The following is a 239-amino-acid chain: UPF0173 metal-dependent hydrolase Msm_0779 (239 aa).

The protein belongs to the UPF0173 family.

The chain is UPF0173 metal-dependent hydrolase Msm_0779 from Methanobrevibacter smithii (strain ATCC 35061 / DSM 861 / OCM 144 / PS).